Consider the following 35-residue polypeptide: Photosystem II reaction center protein T (35 aa).

The helical transmembrane segment at 3-23 threads the bilayer; it reads ALVYTFLLVSTLGIIFFAIFF.

The protein belongs to the PsbT family. As to quaternary structure, PSII is composed of 1 copy each of membrane proteins PsbA, PsbB, PsbC, PsbD, PsbE, PsbF, PsbH, PsbI, PsbJ, PsbK, PsbL, PsbM, PsbT, PsbY, PsbZ, Psb30/Ycf12, at least 3 peripheral proteins of the oxygen-evolving complex and a large number of cofactors. It forms dimeric complexes.

It is found in the plastid. Its subcellular location is the chloroplast thylakoid membrane. Found at the monomer-monomer interface of the photosystem II (PS II) dimer, plays a role in assembly and dimerization of PSII. PSII is a light-driven water plastoquinone oxidoreductase, using light energy to abstract electrons from H(2)O, generating a proton gradient subsequently used for ATP formation. The chain is Photosystem II reaction center protein T from Cedrus deodara (Deodar cedar).